Here is a 352-residue protein sequence, read N- to C-terminus: Histidinol-phosphate aminotransferase (352 aa).

Lys-208 carries the N6-(pyridoxal phosphate)lysine modification.

Belongs to the class-II pyridoxal-phosphate-dependent aminotransferase family. Histidinol-phosphate aminotransferase subfamily. As to quaternary structure, homodimer. Pyridoxal 5'-phosphate is required as a cofactor.

The enzyme catalyses L-histidinol phosphate + 2-oxoglutarate = 3-(imidazol-4-yl)-2-oxopropyl phosphate + L-glutamate. It participates in amino-acid biosynthesis; L-histidine biosynthesis; L-histidine from 5-phospho-alpha-D-ribose 1-diphosphate: step 7/9. The polypeptide is Histidinol-phosphate aminotransferase (Streptococcus sanguinis (strain SK36)).